The sequence spans 322 residues: uncharacterized protein (322 aa).

One can recognise a Radical SAM core domain in the interval 26-267 (HFGHKVFKVA…CDQLEIIPPE (242 aa)). Residues Cys-42, Cys-54, and Cys-57 each contribute to the [4Fe-4S] cluster site.

This sequence belongs to the radical SAM superfamily. The cofactor is [4Fe-4S] cluster.

This is an uncharacterized protein from Bacillus subtilis (strain 168).